The chain runs to 209 residues: FMN-dependent NADH:quinone oxidoreductase (209 aa).

Residues serine 18, 102–105, and 146–149 each bind FMN; these read MYNF and SRGG.

Belongs to the azoreductase type 1 family. In terms of assembly, homodimer. The cofactor is FMN.

It carries out the reaction 2 a quinone + NADH + H(+) = 2 a 1,4-benzosemiquinone + NAD(+). It catalyses the reaction N,N-dimethyl-1,4-phenylenediamine + anthranilate + 2 NAD(+) = 2-(4-dimethylaminophenyl)diazenylbenzoate + 2 NADH + 2 H(+). In terms of biological role, quinone reductase that provides resistance to thiol-specific stress caused by electrophilic quinones. Also exhibits azoreductase activity. Catalyzes the reductive cleavage of the azo bond in aromatic azo compounds to the corresponding amines. This chain is FMN-dependent NADH:quinone oxidoreductase, found in Saccharophagus degradans (strain 2-40 / ATCC 43961 / DSM 17024).